Reading from the N-terminus, the 489-residue chain is Metalloreductase STEAP2 (489 aa).

NADP(+) is bound by residues 37 to 40 (SGDF), 59 to 60 (SR), 92 to 99 (IHREHYTS), Asn117, and Ala150. The FAD site is built by Trp151 and Asp159. Residues 207 to 227 (LFTLWRGPVVVAISLATFFFL) traverse the membrane as a helical segment. Tyr228 lines the Fe(3+) pocket. The helical transmembrane segment at 258 to 278 (LPIVAITLLSLVYLAGLLAAA) threads the bilayer. One can recognise a Ferric oxidoreductase domain in the interval 258–406 (LPIVAITLLS…LGYVALLITT (149 aa)). Gln280 and Arg301 together coordinate FAD. A run of 4 helical transmembrane segments spans residues 304–324 (LGLL…CLPM), 358–378 (MYIS…VTSI), 392–412 (FIQS…VLIY), and 431–451 (FVLA…LLLP). His315 contributes to the heme b binding site. Tyr318 serves as a coordination point for Fe(3+). Ser377 and Gln394 together coordinate FAD. His408 is a binding site for heme b. Residue Ser482 is modified to Phosphoserine.

The protein belongs to the STEAP family. Requires FAD as cofactor. Heme b serves as cofactor.

It is found in the cell membrane. Its subcellular location is the endosome membrane. The catalysed reaction is 2 Fe(2+) + NADP(+) + H(+) = 2 Fe(3+) + NADPH. The enzyme catalyses 2 Cu(+) + NADP(+) + H(+) = 2 Cu(2+) + NADPH. In terms of biological role, integral membrane protein that functions as a NADPH-dependent ferric-chelate reductase, using NADPH from one side of the membrane to reduce a Fe(3+) chelate that is bound on the other side of the membrane. Mediates sequential transmembrane electron transfer from NADPH to FAD and onto heme, and finally to the Fe(3+) chelate. Can also reduce Cu(2+) to Cu(1+). The protein is Metalloreductase STEAP2 (Steap2) of Mus musculus (Mouse).